A 755-amino-acid chain; its full sequence is Histone-lysine N-methyltransferase, H3 lysine-9 specific SUVH8 (755 aa).

2 disordered regions span residues 62–98 (YDRDAGPSTGPVHRERSDAVNEEAHATSIPPHAPPQT) and 111–243 (YDRD…KMVI). 2 stretches are compositionally biased toward basic and acidic residues: residues 73 to 86 (VHRERSDAVNEEAH) and 122 to 135 (IDREASHEVNEDAH). Positions 174 to 186 (KRGRGRPKGSKNG) form a DNA-binding region, a.T hook. Basic residues predominate over residues 174–193 (KRGRGRPKGSKNGSRKPKKP). A compositionally biased stretch (polar residues) spans 197–207 (DNNSTDASAGP). Residues 212–231 (GKRRCGRPKGLKNRSRKPKK) show a composition bias toward basic residues. Residues 310–448 (GPIPGVQVGD…FKEYRFKLLR (139 aa)) enclose the YDG domain. The region spanning 528 to 578 (QSLVQSYIHQNCTCILKNCGQLPYHDNILVCRKPLIYECGGSCPTRMVETG) is the Pre-SET domain. One can recognise an SET domain in the interval 581–723 (LHLEVFKTSN…PMTELTYDYG (143 aa)). Residues 591–593 (CGW), Asp624, Tyr626, Arg676, and 679–680 (NH) each bind S-adenosyl-L-methionine. Residues Cys682, Cys743, Cys745, and Cys750 each contribute to the Zn(2+) site. The Post-SET domain occupies 739–755 (GKKICLCGSVKCRGSFG).

This sequence belongs to the class V-like SAM-binding methyltransferase superfamily. Histone-lysine methyltransferase family. Suvar3-9 subfamily.

It localises to the nucleus. The protein resides in the chromosome. Its subcellular location is the centromere. The catalysed reaction is N(6)-methyl-L-lysyl(9)-[histone H3] + S-adenosyl-L-methionine = N(6),N(6)-dimethyl-L-lysyl(9)-[histone H3] + S-adenosyl-L-homocysteine + H(+). The enzyme catalyses L-lysyl(9)-[histone H3] + S-adenosyl-L-methionine = N(6)-methyl-L-lysyl(9)-[histone H3] + S-adenosyl-L-homocysteine + H(+). Its function is as follows. Histone methyltransferase. Methylates 'Lys-9' of histone H3. H3 'Lys-9' methylation represents a specific tag for epigenetic transcriptional repression. The polypeptide is Histone-lysine N-methyltransferase, H3 lysine-9 specific SUVH8 (SUVH8) (Arabidopsis thaliana (Mouse-ear cress)).